We begin with the raw amino-acid sequence, 554 residues long: Putative acyl-coenzyme A synthetase (554 aa).

195–206 (LLYSSGTTGPPK) lines the AMP pocket.

It belongs to the ATP-dependent AMP-binding enzyme family.

This chain is Putative acyl-coenzyme A synthetase, found in Emericella nidulans (strain FGSC A4 / ATCC 38163 / CBS 112.46 / NRRL 194 / M139) (Aspergillus nidulans).